Consider the following 309-residue polypeptide: Homoserine O-succinyltransferase (309 aa).

Residue C142 is the Acyl-thioester intermediate of the active site. Residues K163 and S192 each contribute to the substrate site. H235 (proton acceptor) is an active-site residue. The active site involves E237. R249 contacts substrate.

It belongs to the MetA family. In terms of assembly, homodimer.

Its subcellular location is the cytoplasm. It catalyses the reaction L-homoserine + succinyl-CoA = O-succinyl-L-homoserine + CoA. It participates in amino-acid biosynthesis; L-methionine biosynthesis via de novo pathway; O-succinyl-L-homoserine from L-homoserine: step 1/1. In terms of biological role, transfers a succinyl group from succinyl-CoA to L-homoserine, forming succinyl-L-homoserine. This is Homoserine O-succinyltransferase from Salmonella gallinarum (strain 287/91 / NCTC 13346).